A 275-amino-acid chain; its full sequence is MATQALVSSSSLTFAAEAVRQSFRARSLPSSVGCSRKGLVRAAATPPVKQGGVDRPLWFASKQSLSYLDGSLPGDYGFDPLGLSDPEGTGGFIEPRWLAYGEVINGRFAMLGAVGAIAPEYLGKVGLIPQETALAWFQTGVIPPAGTYNYWADNYTLFVLEMALMGFAEHRRFQDWAKPGSMGKQYFLGLEKGFGGSGNPAYPGGPFFNPLGFGKDEKSLKELKLKEVKNGRLAMLAILGYFIQGLVTGVGPYQNLLDHVADPVNNNVLTSLKFH.

Trp-58 lines the chlorophyll b pocket. Chlorophyll a contacts are provided by Phe-78, Ser-84, and Glu-102. Residues Arg-107, Ile-142, Glu-169, and Arg-172 each coordinate chlorophyll b. Chlorophyll a-binding residues include Lys-226, Glu-227, Asn-230, Arg-232, Gln-244, and His-259. A helical transmembrane segment spans residues 233 to 253; it reads LAMLAILGYFIQGLVTGVGPY.

This sequence belongs to the light-harvesting chlorophyll a/b-binding (LHC) protein family. The LHC complex consists of chlorophyll a-b binding proteins. The cofactor is Binds at least 14 chlorophylls (8 Chl-a and 6 Chl-b) and carotenoids such as lutein and neoxanthin.. Post-translationally, photoregulated by reversible phosphorylation of its threonine residues.

It localises to the plastid. It is found in the chloroplast thylakoid membrane. In terms of biological role, the light-harvesting complex (LHC) functions as a light receptor, it captures and delivers excitation energy to photosystems with which it is closely associated. Functionally, may channel protons produced in the catalytic Mn center of water oxidation into the thylakoid lumen. The chain is Chlorophyll a-b binding protein 3, chloroplastic from Pisum sativum (Garden pea).